The sequence spans 219 residues: Small ribosomal subunit protein uS3 (219 aa).

The region spanning 41 to 110 (IRKIINTEYS…DVSINICEVK (70 aa)) is the KH type-2 domain.

This sequence belongs to the universal ribosomal protein uS3 family. Part of the 30S ribosomal subunit. Forms a tight complex with proteins S10 and S14.

Its function is as follows. Binds the lower part of the 30S subunit head. Binds mRNA in the 70S ribosome, positioning it for translation. The protein is Small ribosomal subunit protein uS3 of Orientia tsutsugamushi (strain Ikeda) (Rickettsia tsutsugamushi).